The chain runs to 396 residues: Arginine biosynthesis bifunctional protein ArgJ (396 aa).

The substrate site is built by Thr150, Lys177, Thr188, Glu267, Asn391, and Thr396. The Nucleophile role is filled by Thr188.

Belongs to the ArgJ family. As to quaternary structure, heterotetramer of two alpha and two beta chains.

The protein localises to the cytoplasm. It catalyses the reaction N(2)-acetyl-L-ornithine + L-glutamate = N-acetyl-L-glutamate + L-ornithine. The catalysed reaction is L-glutamate + acetyl-CoA = N-acetyl-L-glutamate + CoA + H(+). It participates in amino-acid biosynthesis; L-arginine biosynthesis; L-ornithine and N-acetyl-L-glutamate from L-glutamate and N(2)-acetyl-L-ornithine (cyclic): step 1/1. It functions in the pathway amino-acid biosynthesis; L-arginine biosynthesis; N(2)-acetyl-L-ornithine from L-glutamate: step 1/4. Its function is as follows. Catalyzes two activities which are involved in the cyclic version of arginine biosynthesis: the synthesis of N-acetylglutamate from glutamate and acetyl-CoA as the acetyl donor, and of ornithine by transacetylation between N(2)-acetylornithine and glutamate. This chain is Arginine biosynthesis bifunctional protein ArgJ, found in Wolinella succinogenes (strain ATCC 29543 / DSM 1740 / CCUG 13145 / JCM 31913 / LMG 7466 / NCTC 11488 / FDC 602W) (Vibrio succinogenes).